We begin with the raw amino-acid sequence, 53 residues long: Unknown protein from 2D-PAGE of needles (53 aa).

This is Unknown protein from 2D-PAGE of needles from Pinus pinaster (Maritime pine).